Consider the following 214-residue polypeptide: Type IV major pilin protein PilE1 (214 aa).

Residues 1–7 constitute a propeptide, leader sequence; it reads MNTLQKG. N-methylphenylalanine is present on Phe8. Residues 8–28 traverse the membrane as a helical segment; it reads FTLIELMIVIAIVGILAAVAL. A disulfide bond links Cys127 and Cys161. The interval 182–214 is disordered; the sequence is AGTDAVTADTTGKDKEIDTKHLPSTCRDKSSAE. Residues 192–214 are compositionally biased toward basic and acidic residues; that stretch reads TGKDKEIDTKHLPSTCRDKSSAE.

The protein belongs to the N-Me-Phe pilin family. As to quaternary structure, the pili are polar flexible filaments of about 5.4 nanometers diameter and 2.5 micrometers average length; they consist of only a single polypeptide chain arranged in a helical configuration of five subunits per turn in the assembled pilus.

The protein resides in the fimbrium. Its subcellular location is the membrane. Its function is as follows. Major component of the type IV pilus (T4P) that plays a role in cellular adherence, microcolony formation, resistance to neutrophil mediated killing, twitching motility as well as transformation. Mediates the attachment and the formation of bacterial microcolonies on host epithelial cells. Mechanistically, pili retractation induces host NF-kappa-B activation in infected cells, which is temporally associated with the formation of gonococcal microcolonies. The polypeptide is Type IV major pilin protein PilE1 (pilE1) (Neisseria gonorrhoeae).